We begin with the raw amino-acid sequence, 913 residues long: Sterol uptake control protein 2 (913 aa).

The zn(2)-C6 fungal-type DNA-binding region spans Gly-50 to Tyr-80. 2 disordered regions span residues Gly-103–Leu-173 and Gly-216–Ser-258. At Thr-122 the chain carries Phosphothreonine. Residues Ser-150 to Asn-164 are compositionally biased toward basic and acidic residues. A compositionally biased stretch (low complexity) spans Gln-222–Gln-241. A coiled-coil region spans residues Gln-303–Val-346. Disordered regions lie at residues Leu-347–Ser-385 and Met-453–Ser-489. Residues Leu-374 to Ser-385 show a composition bias toward polar residues. Residues Ala-440–Ser-472 are a coiled coil. The segment covering Gln-454–Asp-468 has biased composition (basic and acidic residues). Residues Gly-469–Ser-487 are compositionally biased toward polar residues. A Phosphoserine modification is found at Ser-519. Over residues Glu-552–Thr-562 the composition is skewed to polar residues. The segment at Glu-552–Gln-571 is disordered.

Its subcellular location is the nucleus. Its function is as follows. Transcription factor that is involved in activation of anaerobic genes such as DAN/TIR cell wall mannoprotein genes and YML083c. Appears to bind to anaerobic response elements (AR1) with the consensus sequence 5'-TCGTTYAG-3' present in the promoter regions of DAN/TIR genes. Involved in sterol uptake and regulation of the sterol biosynthesis. Binds to sterol regulatory elements (SRE) with the consensus sequence 5'-TCGTATA-3' present in ERG2 and ERG3 promoters. May be involved in down-regulation of CWP2 during anaerobic adaptation. This chain is Sterol uptake control protein 2 (UPC2), found in Saccharomyces cerevisiae (strain ATCC 204508 / S288c) (Baker's yeast).